Reading from the N-terminus, the 267-residue chain is Tryptophan synthase alpha chain (267 aa).

Active-site proton acceptor residues include Glu49 and Asp60.

The protein belongs to the TrpA family. Tetramer of two alpha and two beta chains.

The catalysed reaction is (1S,2R)-1-C-(indol-3-yl)glycerol 3-phosphate + L-serine = D-glyceraldehyde 3-phosphate + L-tryptophan + H2O. Its pathway is amino-acid biosynthesis; L-tryptophan biosynthesis; L-tryptophan from chorismate: step 5/5. Functionally, the alpha subunit is responsible for the aldol cleavage of indoleglycerol phosphate to indole and glyceraldehyde 3-phosphate. In Citrifermentans bemidjiense (strain ATCC BAA-1014 / DSM 16622 / JCM 12645 / Bem) (Geobacter bemidjiensis), this protein is Tryptophan synthase alpha chain.